Consider the following 376-residue polypeptide: Protein FhaE (376 aa).

A signal peptide spans 1–37 (MSQIFADRRAAVPARVISFCGAALAVWAGLAVQPAMA).

This is Protein FhaE (fhaE) from Bordetella pertussis (strain Tohama I / ATCC BAA-589 / NCTC 13251).